The sequence spans 875 residues: Neurotrypsin (875 aa).

An N-terminal signal peptide occupies residues M1–G20. Residue N26 is glycosylated (N-linked (GlcNAc...) asparagine). Residues L29–P88 are disordered. Pro residues predominate over residues T56–A71. The 73-residue stretch at C93–C165 folds into the Kringle domain. 20 disulfides stabilise this stretch: C93/C165, C109/C149, C138/C163, C195/C259, C208/C269, C239/C249, C305/C369, C318/C379, C349/C359, C412/C475, C425/C485, C455/C465, C525/C589, C538/C599, C569/C579, C619/C750, C661/C677, C765/C831, C794/C808, and C821/C850. 4 consecutive SRCR domains span residues V170–F271, I280–P381, I387–P487, and V500–Y601. The zymogen activation region stretch occupies residues C619 to R630. The region spanning I631–K874 is the Peptidase S1 domain. Catalysis depends on H676, which acts as the Charge relay system. A glycan (N-linked (GlcNAc...) asparagine) is linked at N683. D726 (charge relay system) is an active-site residue. Residue S825 is the Charge relay system of the active site.

It belongs to the peptidase S1 family. In terms of tissue distribution, brain and Leydig cells of the testis.

Its subcellular location is the secreted. In terms of biological role, plays a role in neuronal plasticity and the proteolytic action may subserve structural reorganizations associated with learning and memory operations. The protein is Neurotrypsin (PRSS12) of Homo sapiens (Human).